A 160-amino-acid polypeptide reads, in one-letter code: Cytochrome b6-f complex subunit 4 (160 aa).

3 helical membrane passes run L36–V56, L95–E115, and A131–I151.

This sequence belongs to the cytochrome b family. PetD subfamily. The 4 large subunits of the cytochrome b6-f complex are cytochrome b6, subunit IV (17 kDa polypeptide, petD), cytochrome f and the Rieske protein, while the 4 small subunits are petG, petL, petM and petN. The complex functions as a dimer.

It localises to the plastid. The protein localises to the chloroplast thylakoid membrane. Its function is as follows. Component of the cytochrome b6-f complex, which mediates electron transfer between photosystem II (PSII) and photosystem I (PSI), cyclic electron flow around PSI, and state transitions. The polypeptide is Cytochrome b6-f complex subunit 4 (Bigelowiella natans (Pedinomonas minutissima)).